The sequence spans 314 residues: Methionyl-tRNA formyltransferase (314 aa).

113 to 116 is a binding site for (6S)-5,6,7,8-tetrahydrofolate; sequence SLLP.

Belongs to the Fmt family.

It carries out the reaction L-methionyl-tRNA(fMet) + (6R)-10-formyltetrahydrofolate = N-formyl-L-methionyl-tRNA(fMet) + (6S)-5,6,7,8-tetrahydrofolate + H(+). Attaches a formyl group to the free amino group of methionyl-tRNA(fMet). The formyl group appears to play a dual role in the initiator identity of N-formylmethionyl-tRNA by promoting its recognition by IF2 and preventing the misappropriation of this tRNA by the elongation apparatus. This chain is Methionyl-tRNA formyltransferase, found in Pseudomonas syringae pv. syringae (strain B728a).